A 115-amino-acid polypeptide reads, in one-letter code: NADH-ubiquinone oxidoreductase chain 3 (115 aa).

3 helical membrane passes run 4–24 (FIVL…AFWL), 55–75 (FFLV…LLPL), and 87–107 (TMLT…YEWL).

The protein belongs to the complex I subunit 3 family. As to quaternary structure, core subunit of respiratory chain NADH dehydrogenase (Complex I) which is composed of 45 different subunits. Interacts with TMEM186. Interacts with TMEM242.

Its subcellular location is the mitochondrion inner membrane. It catalyses the reaction a ubiquinone + NADH + 5 H(+)(in) = a ubiquinol + NAD(+) + 4 H(+)(out). Core subunit of the mitochondrial membrane respiratory chain NADH dehydrogenase (Complex I) which catalyzes electron transfer from NADH through the respiratory chain, using ubiquinone as an electron acceptor. Essential for the catalytic activity of complex I. The chain is NADH-ubiquinone oxidoreductase chain 3 from Reithrodontomys megalotis (Western harvest mouse).